A 334-amino-acid chain; its full sequence is Cathepsin R (334 aa).

The first 17 residues, 1–17 (MAAVVFIAFLYLGVASG), serve as a signal peptide directing secretion. The propeptide at 18-114 (VPVLDSSLDA…SIMKREAGSI (97 aa)) is activation peptide. Disulfide bonds link Cys136-Cys179 and Cys170-Cys212. The active site involves Cys139. N-linked (GlcNAc...) asparagine glycosylation occurs at Asn269. Cys270 and Cys323 form a disulfide bridge. Catalysis depends on residues His277 and Asn301.

The protein belongs to the peptidase C1 family. As to expression, placenta.

Its subcellular location is the lysosome. The chain is Cathepsin R (Ctsr) from Mus musculus (Mouse).